A 98-amino-acid polypeptide reads, in one-letter code: Elicitin Vex1 (98 aa).

Disulfide bonds link C3/C71, C27/C56, and C51/C95. A glycan (N-linked (GlcNAc...) asparagine) is linked at N92.

This sequence belongs to the elicitin family.

The protein localises to the secreted. Its function is as follows. Induces local and distal defense responses (incompatible hypersensitive reaction) in plants from the solanaceae and cruciferae families. Elicits leaf necrosis and causes the accumulation of pathogenesis-related proteins. Might interact with the lipidic molecules of the plasma membrane. The polypeptide is Elicitin Vex1 (Phytopythium vexans (Damping-off fungus)).